Reading from the N-terminus, the 72-residue chain is Potassium channel toxin kappa-KTx 5.1 (72 aa).

The first 23 residues, 1 to 23 (MKLLPLLFVILIVCAILPDEASC), serve as a signal peptide directing secretion. The propeptide occupies 24–43 (DQSELERKEENFKDESREIV). Intrachain disulfides connect Cys-47/Cys-64 and Cys-51/Cys-60. The residue at position 70 (His-70) is a Histidine amide.

The protein belongs to the short scorpion toxin superfamily. Potassium channel inhibitor kappa-KTx family. Kappa-KTx 5 subfamily. Expressed by the venom gland.

The protein resides in the secreted. In terms of biological role, weak blocker of potassium channels Kv1.1/KCNA1 (IC(50)=578.5 nM-9.9 uM) and Kv1.6/KCNA6 (~60% block at 30 uM of toxin). Acts by binding to the pore and occluding it. Has a voltage-dependent mode of action, which can be explained by a high content of basic residues causing repulsions at higher membrane voltages. Shows a weak interaction with muscle-type nicotinic acetylcholine receptors (nAChR), since it inhibits alpha-bungarotoxin binding to muscle-type nAChR from T.californica (IC(50)=1.4 uM). This suggests it probably weakly inhibits muscle nAChR. The mode of binding to potassium channels of this toxin differs from its homologs (including HefuTx1), since it lacks the key aromatic residue of the functional dyad. In contrast, its functionally important site is composed of a number of basic residues. This chain is Potassium channel toxin kappa-KTx 5.1, found in Heterometrus laoticus (Thai giant scorpion).